A 121-amino-acid polypeptide reads, in one-letter code: UPF0102 protein BDI_2565 (121 aa).

It belongs to the UPF0102 family.

The sequence is that of UPF0102 protein BDI_2565 from Parabacteroides distasonis (strain ATCC 8503 / DSM 20701 / CIP 104284 / JCM 5825 / NCTC 11152).